The following is a 190-amino-acid chain: NADH-quinone oxidoreductase subunit B (190 aa).

[4Fe-4S] cluster is bound by residues Cys-39, Cys-40, Cys-104, and Cys-135.

The protein belongs to the complex I 20 kDa subunit family. As to quaternary structure, NDH-1 is composed of 14 different subunits. Subunits NuoB, C, D, E, F, and G constitute the peripheral sector of the complex. [4Fe-4S] cluster is required as a cofactor.

The protein resides in the cell inner membrane. It carries out the reaction a quinone + NADH + 5 H(+)(in) = a quinol + NAD(+) + 4 H(+)(out). In terms of biological role, NDH-1 shuttles electrons from NADH, via FMN and iron-sulfur (Fe-S) centers, to quinones in the respiratory chain. The immediate electron acceptor for the enzyme in this species is believed to be a menaquinone. Couples the redox reaction to proton translocation (for every two electrons transferred, four hydrogen ions are translocated across the cytoplasmic membrane), and thus conserves the redox energy in a proton gradient. The protein is NADH-quinone oxidoreductase subunit B of Chlorobium phaeobacteroides (strain BS1).